Reading from the N-terminus, the 459-residue chain is MDQSNRYADLSLKEEDLIAGGRHILVAYKMKPKAGHGYLEAAAHFAAESSTGTNVEVSTTDEFTKGVDALVYLIDEATEEMRIAFPMDLFDRNILDGRMMIVSFLTLVIGNNQGMGDIQHAKIYDFFMPPRAIQLFDGPSKDISDMWRILGRPVKDGGYIAGTIIKPKLGLRPEPFAQAAYQFWLGGDFIKNDEPQGNQTFAPMNKVMPLVHDAMKRAMDETGEAKLFSANITADDHYEMLARGDYILRTFGPDADKVAFLVDGYVGGPGMITTARRAFPNQYLHYHRAGHGAVTSPSAKRGYDAYVLAKMSRLQGASGIHVGTMGYGKMEGTHDDRAIAYIIERDSYTGPAYHQEWYGMKPTTPIISGGMNALRLPGFFENLGHGNVINTSGGGAYGHIDSPAAGATSLRQAYECWKAKADPIEWAKEHPEFARAFASFPGDADMLFPGWRDKLASHR.

Residue N111 participates in substrate binding. The Proton acceptor role is filled by K166. K168 contributes to the substrate binding site. Mg(2+) is bound by residues K191, D193, and E194. An N6-carboxylysine modification is found at K191. H287 serves as the catalytic Proton acceptor. Substrate is bound by residues R288, H321, and S368.

The protein belongs to the RuBisCO large chain family. Type II subfamily. As to quaternary structure, homodimer. It depends on Mg(2+) as a cofactor.

The enzyme catalyses 2 (2R)-3-phosphoglycerate + 2 H(+) = D-ribulose 1,5-bisphosphate + CO2 + H2O. The catalysed reaction is D-ribulose 1,5-bisphosphate + O2 = 2-phosphoglycolate + (2R)-3-phosphoglycerate + 2 H(+). RuBisCO catalyzes two reactions: the carboxylation of D-ribulose 1,5-bisphosphate, the primary event in carbon dioxide fixation, as well as the oxidative fragmentation of the pentose substrate. Both reactions occur simultaneously and in competition at the same active site. This chain is Ribulose bisphosphate carboxylase, found in Polaromonas naphthalenivorans (strain CJ2).